The primary structure comprises 242 residues: Ribonuclease PH (242 aa).

Phosphate contacts are provided by residues Arg86 and Gly124–Arg126.

Belongs to the RNase PH family. As to quaternary structure, homohexameric ring arranged as a trimer of dimers.

The catalysed reaction is tRNA(n+1) + phosphate = tRNA(n) + a ribonucleoside 5'-diphosphate. Its function is as follows. Phosphorolytic 3'-5' exoribonuclease that plays an important role in tRNA 3'-end maturation. Removes nucleotide residues following the 3'-CCA terminus of tRNAs; can also add nucleotides to the ends of RNA molecules by using nucleoside diphosphates as substrates, but this may not be physiologically important. Probably plays a role in initiation of 16S rRNA degradation (leading to ribosome degradation) during starvation. The sequence is that of Ribonuclease PH from Caulobacter sp. (strain K31).